Here is an 869-residue protein sequence, read N- to C-terminus: Protein translocase subunit SecA (869 aa).

Residues Gln85, 103 to 107 (GEGKT), and Asp508 contribute to the ATP site.

The protein belongs to the SecA family. As to quaternary structure, monomer and homodimer. Part of the essential Sec protein translocation apparatus which comprises SecA, SecYEG and auxiliary proteins SecDF. Other proteins may also be involved.

It localises to the cell membrane. The protein resides in the cytoplasm. The catalysed reaction is ATP + H2O + cellular proteinSide 1 = ADP + phosphate + cellular proteinSide 2.. Part of the Sec protein translocase complex. Interacts with the SecYEG preprotein conducting channel. Has a central role in coupling the hydrolysis of ATP to the transfer of proteins into and across the cell membrane, serving as an ATP-driven molecular motor driving the stepwise translocation of polypeptide chains across the membrane. This is Protein translocase subunit SecA from Deinococcus geothermalis (strain DSM 11300 / CIP 105573 / AG-3a).